A 222-amino-acid polypeptide reads, in one-letter code: Deoxyribose-phosphate aldolase (222 aa).

Asp-94 (proton donor/acceptor) is an active-site residue. Lys-156 functions as the Schiff-base intermediate with acetaldehyde in the catalytic mechanism. Lys-185 (proton donor/acceptor) is an active-site residue.

It belongs to the DeoC/FbaB aldolase family. DeoC type 1 subfamily.

The protein localises to the cytoplasm. The enzyme catalyses 2-deoxy-D-ribose 5-phosphate = D-glyceraldehyde 3-phosphate + acetaldehyde. Its pathway is carbohydrate degradation; 2-deoxy-D-ribose 1-phosphate degradation; D-glyceraldehyde 3-phosphate and acetaldehyde from 2-deoxy-alpha-D-ribose 1-phosphate: step 2/2. Functionally, catalyzes a reversible aldol reaction between acetaldehyde and D-glyceraldehyde 3-phosphate to generate 2-deoxy-D-ribose 5-phosphate. This Malacoplasma penetrans (strain HF-2) (Mycoplasma penetrans) protein is Deoxyribose-phosphate aldolase.